The chain runs to 239 residues: Ribonuclease 3 (239 aa).

An RNase III domain is found at 11 to 133 (HTAIQKKLGY…MFAAVSFDAD (123 aa)). Glu46 contacts Mg(2+). Residue Asp50 is part of the active site. The Mg(2+) site is built by Asp119 and Glu122. Glu122 is an active-site residue. Residues 160–230 (DGKTALQEAL…AKEALKWLEE (71 aa)) form the DRBM domain.

Belongs to the ribonuclease III family. Homodimer. Requires Mg(2+) as cofactor.

It localises to the cytoplasm. It catalyses the reaction Endonucleolytic cleavage to 5'-phosphomonoester.. Its function is as follows. Digests double-stranded RNA. Involved in the processing of primary rRNA transcript to yield the immediate precursors to the large and small rRNAs (23S and 16S). Processes some mRNAs, and tRNAs when they are encoded in the rRNA operon. Processes pre-crRNA and tracrRNA of type II CRISPR loci if present in the organism. This chain is Ribonuclease 3, found in Neisseria gonorrhoeae (strain ATCC 700825 / FA 1090).